Consider the following 315-residue polypeptide: Olfactory receptor 4A5 (315 aa).

The Extracellular segment spans residues 1–23 (MRQNNNITEFVLLGFSQDPGVQK). An N-linked (GlcNAc...) asparagine glycan is attached at N6. A helical membrane pass occupies residues 24–47 (ALFVMFLLTYLVTVVGNLLIVVDI). The Cytoplasmic segment spans residues 48–55 (IASPSLGS). Residues 56 to 77 (PMYFFLACLSFIDAAYSTTISP) traverse the membrane as a helical segment. Residues 78–98 (KLIVGLFCDKKTISFQGCMGQ) lie on the Extracellular side of the membrane. The cysteines at positions 95 and 186 are disulfide-linked. Residues 99–118 (LFIDHFFGGAEVFLLVVMAC) form a helical membrane-spanning segment. The Cytoplasmic segment spans residues 119–137 (DRYVAICKPLHYLTIMNRQ). Residues 138–156 (VCFLLLVVAMIGGFVHSAF) traverse the membrane as a helical segment. Residues 157–192 (QIVVYSLPFCGPNVIVHFSCDMHPLLELACTDTYFI) are Extracellular-facing. Residues 193–216 (GLTVVVNSGAICMVIFNLLLISYG) form a helical membrane-spanning segment. Topologically, residues 217-232 (VILSSLKTYSQEKRGK) are cytoplasmic. A helical membrane pass occupies residues 233–255 (ALSTCSSGSTVVVLFFVPCIFIY). The Extracellular portion of the chain corresponds to 256-266 (VRPVSNFPTDK). The chain crosses the membrane as a helical span at residues 267 to 286 (FMTVFYTIITHMLSPLIYTL). Residues 287-315 (RNSEMRNAIEKLLGKKLTIFIIGGVSVLM) lie on the Cytoplasmic side of the membrane.

The protein belongs to the G-protein coupled receptor 1 family.

The protein resides in the cell membrane. Odorant receptor. In Homo sapiens (Human), this protein is Olfactory receptor 4A5 (OR4A5).